A 542-amino-acid polypeptide reads, in one-letter code: LysM domain-containing protein ARB_00327 (542 aa).

Residues 1 to 35 (MLSSVLFPAMRTLLLLKYVFSLISLSAICCQTVSA) form the signal peptide. N218, N298, N381, and N415 each carry an N-linked (GlcNAc...) asparagine glycan. Residues 264 to 310 (RWYGVKKGDYCNLIVLKFGITMDNFIFLNPALNSNCTNLYAEESYCV) enclose the LysM 1 domain. The interval 439–484 (DSDEPTPTTPITTSDDPTSTSATPTTPTTSSKPSPGAPTMTGQPSA) is disordered. Residues 443–472 (PTPTTPITTSDDPTSTSATPTTPTTSSKPS) show a composition bias toward low complexity. One can recognise a LysM 2 domain in the interval 487–534 (KWHTVTNGESCTVIPKTFGITLEQFLAWNPTVKSDCTENFWAGYAYCV).

It localises to the secreted. Its function is as follows. Might have a role in sequestration of chitin oligosaccharides (breakdown products of fungal cell walls that are released during invasion and act as triggers of host immunity) to dampen host defense. In Arthroderma benhamiae (strain ATCC MYA-4681 / CBS 112371) (Trichophyton mentagrophytes), this protein is LysM domain-containing protein ARB_00327.